A 187-amino-acid chain; its full sequence is UPF0301 protein GOX1459 (187 aa).

It belongs to the UPF0301 (AlgH) family.

The polypeptide is UPF0301 protein GOX1459 (Gluconobacter oxydans (strain 621H) (Gluconobacter suboxydans)).